Here is a 211-residue protein sequence, read N- to C-terminus: MTTEAAPNLLVLTRHGESEWNKLNLFTGWKDPALSETGIKEAKLGGERLKSRGYKFDIAFTSALQRAQKTCQIILEEVGEPNLETIKSEKLNERYYGDLQGLNKDDARKKWGAEQVQIWRRSYDIAPPNGESLKDTAERVLPYYKSTIVPHILKGEKVLIAAHGNSLRALIMDLEGLTGDQIVKRELATGVPIVYHLDKDGKYVSKELIDN.

Substrate contacts are provided by residues 14 to 21 (RHGESEWN) and 27 to 28 (TG). The active-site Tele-phosphohistidine intermediate is the H15. At T37 the chain carries Phosphothreonine. S62 carries the post-translational modification Phosphoserine. Substrate contacts are provided by residues R66, 93 to 96 (ERYY), K104, 120 to 121 (RR), and 164 to 165 (GN). E93 functions as the Proton donor/acceptor in the catalytic mechanism. Y96 carries the phosphotyrosine modification. Position 166 is a phosphoserine (S166).

Belongs to the phosphoglycerate mutase family. BPG-dependent PGAM subfamily. Monomer. The N-terminus is blocked.

The catalysed reaction is (2R)-2-phosphoglycerate = (2R)-3-phosphoglycerate. It participates in carbohydrate degradation; glycolysis; pyruvate from D-glyceraldehyde 3-phosphate: step 3/5. The polypeptide is Phosphoglycerate mutase (gpm1) (Schizosaccharomyces pombe (strain 972 / ATCC 24843) (Fission yeast)).